Consider the following 353-residue polypeptide: Homeobox protein Mohawk (353 aa).

The span at 18 to 27 shows a compositional bias: basic and acidic residues; that stretch reads RGTPDRERGS. The interval 18–50 is disordered; sequence RGTPDRERGSRTFSGFLDNPHTGPEVGIPDGPP. A DNA-binding region (homeobox; TALE-type) is located at residues 71–132; it reads VRHKRQALQD…NARRRLKNTV (62 aa). Disordered regions lie at residues 157 to 183 and 243 to 302; these read LSVSSDGDSCSEDGENPPRNHMNEEGY and MGKT…PSKD.

The protein belongs to the TALE/IRO homeobox family.

It localises to the nucleus. May act as a morphogenetic regulator of cell adhesion. Participates in the early events that lead to differentiation. This Mus musculus (Mouse) protein is Homeobox protein Mohawk (Mkx).